The chain runs to 333 residues: Plasminogen (333 aa).

Residues Cys-4–Cys-83 enclose the Kringle 5 domain. 9 cysteine pairs are disulfide-bonded: Cys-4–Cys-83, Cys-25–Cys-66, Cys-54–Cys-78, Cys-90–Cys-208, Cys-100–Cys-108, Cys-130–Cys-146, Cys-222–Cys-289, Cys-252–Cys-268, and Cys-279–Cys-307. The 228-residue stretch at Val-104–Arg-331 folds into the Peptidase S1 domain. Phosphoserine is present on Ser-120. Catalysis depends on charge relay system residues His-145 and Asp-188. The active-site Charge relay system is Ser-283.

It belongs to the peptidase S1 family. Plasminogen subfamily. Interacts with CSPG4 and AMOT. Interacts (via the Kringle domains) with HRG; the interaction tethers PLG to the cell surface and enhances its activation. Interacts (via Kringle 4 domain) with ADA; the interaction stimulates PLG activation when in complex with DPP4. Angiostatin: Interacts with ATP5F1A; the interaction inhibits most of the angiogenic effects of angiostatin.

The protein localises to the secreted. The enzyme catalyses Preferential cleavage: Lys-|-Xaa &gt; Arg-|-Xaa, higher selectivity than trypsin. Converts fibrin into soluble products.. With respect to regulation, converted into plasmin by plasminogen activators, both plasminogen and its activator being bound to fibrin. Activated with urokinase and high concentrations of streptokinase. Its function is as follows. Plasmin dissolves the fibrin of blood clots and acts as a proteolytic factor in a variety of other processes including embryonic development, tissue remodeling, tumor invasion, and inflammation. In ovulation, weakens the walls of the Graafian follicle. It activates the urokinase-type plasminogen activator, collagenases and several complement zymogens, such as C1, C4 and C5. Cleavage of fibronectin and laminin leads to cell detachment and apoptosis. Also cleaves fibrin, thrombospondin and von Willebrand factor. Its role in tissue remodeling and tumor invasion may be modulated by CSPG4. Binds to cells. This is Plasminogen (PLG) from Canis lupus familiaris (Dog).